The following is a 67-amino-acid chain: Neurotoxin Os3 (67 aa).

The 65-residue stretch at 3-67 (RDGYIAQPHN…GVIVDGEKCH (65 aa)) folds into the LCN-type CS-alpha/beta domain. 4 disulfide bridges follow: cysteine 13–cysteine 66, cysteine 17–cysteine 39, cysteine 24–cysteine 48, and cysteine 28–cysteine 50.

The protein belongs to the long (4 C-C) scorpion toxin superfamily. Sodium channel inhibitor family. Alpha subfamily. Expressed by the venom gland.

It localises to the secreted. Its function is as follows. Binds to sodium channels (Nav) and inhibits the inactivation of the activated channels, thereby blocking neuronal transmission. In Orthochirus scrobiculosus (Central Asian scorpion), this protein is Neurotoxin Os3.